The chain runs to 343 residues: Leucine-rich repeat-containing protein 39 (343 aa).

10 LRR repeats span residues 64-87 (EEGRVILRIEKEEWKTLPPALVQL), 88-110 (SQIQEWQLHRIGLQRIPRFISSF), 111-133 (QSLIVLDLSRNSVTEIPKEIGKL), 134-156 (TRLRELLLSYNRVSYVPEELGCC), 158-180 (NLEKLELAMNRDLDELPTQLSNL), 181-203 (KKLSHLDLSMNQFTTIPDCVVNL), 204-226 (PSLEWLDMGSNILETLPDNIHRM), 228-249 (KLHTLWLPRNELEYLPDNISRM), 250-274 (KSLDTLVLSKNKLRDIPPLMEGMSN), and 275-295 (LRFVNFRDNPLTYDVTLPDLN).

It is found in the cytoplasm. The protein resides in the myofibril. Its subcellular location is the sarcomere. It localises to the m line. In terms of biological role, component of the sarcomeric M-band which plays a role in myocyte response to biomechanical stress. May regulate expression of other M-band proteins via an SRF-dependent pathway. Important for normal contractile function in heart. The polypeptide is Leucine-rich repeat-containing protein 39 (Danio rerio (Zebrafish)).